A 161-amino-acid chain; its full sequence is 18.3 kDa class I heat shock protein (161 aa).

A sHSP domain is found at 48–161 (ETAAFANARI…KPQVKAINVY (114 aa)).

It belongs to the small heat shock protein (HSP20) family. In terms of assembly, forms oligomeric structures.

The protein localises to the cytoplasm. The sequence is that of 18.3 kDa class I heat shock protein (HSP18) from Oxybasis rubra (Red goosefoot).